Reading from the N-terminus, the 367-residue chain is Glutamate 5-kinase (367 aa).

Residue Lys-10 coordinates ATP. Residues Ser-50, Asp-137, and Asn-149 each coordinate substrate. Residues 169–170 (TD) and 211–217 (TGGMSTK) contribute to the ATP site. Positions 275 to 353 (AGEITVDEGA…QQIDAILGYE (79 aa)) constitute a PUA domain.

This sequence belongs to the glutamate 5-kinase family.

It localises to the cytoplasm. It catalyses the reaction L-glutamate + ATP = L-glutamyl 5-phosphate + ADP. It functions in the pathway amino-acid biosynthesis; L-proline biosynthesis; L-glutamate 5-semialdehyde from L-glutamate: step 1/2. Its function is as follows. Catalyzes the transfer of a phosphate group to glutamate to form L-glutamate 5-phosphate. The chain is Glutamate 5-kinase from Salmonella arizonae (strain ATCC BAA-731 / CDC346-86 / RSK2980).